The primary structure comprises 267 residues: Sulfate transporter CysZ (267 aa).

A run of 4 helical transmembrane segments spans residues 29 to 49, 73 to 93, 149 to 169, and 212 to 232; these read FVIMPILLNIVLLSGLFWLFI, ILLIFAILMILVLFYFVFTTL, IILFLLGFVPVLGQSVIPIIV, and GLVMLCTFIPLVNLVVIPVAV.

The protein belongs to the CysZ family.

It localises to the cell inner membrane. Its function is as follows. High affinity, high specificity proton-dependent sulfate transporter, which mediates sulfate uptake. Provides the sulfur source for the cysteine synthesis pathway. This is Sulfate transporter CysZ from Pasteurella multocida (strain Pm70).